Here is a 325-residue protein sequence, read N- to C-terminus: MSWFTPEVIDILISIVKAVVILLVVVTCGAFMSFGERRLLGLFQNRYGPNRVGWGGSLQLVADMIKMFFKEDWVPKFSDRVIFTLAPMIAFTSLLLAFAIVPVSPTWAVSDLNIGILFFLMMAGLAVYAVLFAGWSSNNKYSLLGAMRASAQTLSYEVFIGLSLMGVVAQADSFNMQAIVESQAHMWNVIPQFFGFITFAIAGVAVCHRHPFDQPEAEQELADGYHIEYSGMKFGLFFVGEYIGIVTVSALIVTLFFGGWQGPFLPPFVWFALKTAFFMMMFILIRAALPRPRYDQVMSFGWKVCLPLTLLNLLATAAVILYNAQ.

Helical transmembrane passes span 11-31 (ILIS…CGAF), 81-101 (VIFT…FAIV), 114-134 (IGIL…LFAG), 149-169 (ASAQ…GVVA), 186-206 (MWNV…GVAV), 237-257 (FFVG…TLFF), 265-285 (LPPF…FILI), and 304-324 (VCLP…LYNA).

Belongs to the complex I subunit 1 family. NDH-1 is composed of 13 different subunits. Subunits NuoA, H, J, K, L, M, N constitute the membrane sector of the complex.

It is found in the cell inner membrane. The catalysed reaction is a quinone + NADH + 5 H(+)(in) = a quinol + NAD(+) + 4 H(+)(out). In terms of biological role, NDH-1 shuttles electrons from NADH, via FMN and iron-sulfur (Fe-S) centers, to quinones in the respiratory chain. The immediate electron acceptor for the enzyme in this species is believed to be ubiquinone. Couples the redox reaction to proton translocation (for every two electrons transferred, four hydrogen ions are translocated across the cytoplasmic membrane), and thus conserves the redox energy in a proton gradient. This subunit may bind ubiquinone. In Serratia proteamaculans (strain 568), this protein is NADH-quinone oxidoreductase subunit H.